A 3072-amino-acid polypeptide reads, in one-letter code: Eukaryotic translation initiation factor 2-alpha kinase PK4 (3072 aa).

Residues 1 to 106 are Cytoplasmic-facing; the sequence is MCNFIKKGIR…EFRWLINKLE (106 aa). The helical transmembrane segment at 107 to 127 threads the bilayer; that stretch reads IIYFYFFCHLLLLCIFQNIFL. Over 128–1643 the chain is Lumenal; sequence LTYMSKEYFL…FTSIRYKRRR (1516 aa). A disordered region spans residues 383–402; the sequence is KEKCHRDEKCDRGENYDRGE. Residues 576 to 610 form a 10 X 7 AA tandem repeat of D-K-N-[GE]-L-D-[GD] region; the sequence is KKKILDENDMITIDNNIDKKENILFPYFHMEILKD. Residues 970-1010 are disordered; sequence QYEDNNDNDNNKNDNNKNDNNKNDNNKNDNNNNNNNNNNNS. Residues 978-996 show a composition bias toward basic and acidic residues; the sequence is DNNKNDNNKNDNNKNDNNK. Low complexity predominate over residues 997 to 1009; it reads NDNNNNNNNNNNN. The chain crosses the membrane as a helical span at residues 1644-1664; it reads WYWRVFYTIMFIIFFPVLFIY. Residues 1665–3072 lie on the Cytoplasmic side of the membrane; that stretch reads RRIIKRRKGS…IKNENNGADK (1408 aa). Disordered regions lie at residues 1737-1766 and 1917-1937; these read KNYNNNNNNNNNKNNNNISNNNSNSNSKSN and KVGSSNKYHKKNYTDNEKDKK. A compositionally biased stretch (low complexity) spans 1738–1766; the sequence is NYNNNNNNNNNKNNNNISNNNSNSNSKSN. Positions 1928-1937 are enriched in basic and acidic residues; that stretch reads NYTDNEKDKK. ATP is bound by residues 2152 to 2160 and K2177; that span reads IGQGGFGSV. Disordered regions lie at residues 2316–2402, 2479–2558, and 2691–2749; these read FYSD…EGRD, RNED…KKLD, and ENDD…DDDI. The span at 2326-2335 shows a compositional bias: basic and acidic residues; it reads KNKENPEKNH. The span at 2362–2384 shows a compositional bias: basic residues; that stretch reads HKLKKRKNKKKKSKKKRKSKSKI. 10 repeat units span residues 2483–2489, 2490–2496, 2497–2503, 2504–2510, 2511–2517, 2518–2524, 2525–2531, 2532–2538, 2539–2545, and 2546–2552. The 372-residue stretch at 2627–2998 folds into the Protein kinase domain; sequence TNVESINTNG…KIKVLLDPHL (372 aa). Residues 2692–2702 show a composition bias toward acidic residues; sequence NDDDDDDDDDN. The Proton acceptor role is filled by D2835. T2902 carries the phosphothreonine modification.

This sequence belongs to the protein kinase superfamily. Ser/Thr protein kinase family. GCN2 subfamily. May form oligomers in response to stress; oligomerization may result in catalytic activity. Interacts with BIP; the interaction is disrupted in response to stress. In terms of processing, auto-phosphorylated.

It is found in the endoplasmic reticulum membrane. It catalyses the reaction L-seryl-[protein] + ATP = O-phospho-L-seryl-[protein] + ADP + H(+). The enzyme catalyses L-threonyl-[protein] + ATP = O-phospho-L-threonyl-[protein] + ADP + H(+). With respect to regulation, dissociation from BIP and oligomerization, may results autophosphorylation and kinase activity induction. Functionally, during the asexual blood stage, phosphorylates translation factor eIF2alpha in late schizonts resulting in protein translation inhibition. Plays a role in trophozoite differentiation into schizonts. This Plasmodium falciparum (isolate 3D7) protein is Eukaryotic translation initiation factor 2-alpha kinase PK4.